Consider the following 396-residue polypeptide: Enoyl-[acyl-carrier-protein] reductase [NADH] (396 aa).

NAD(+) contacts are provided by residues 47–52 (GASTGF), 73–74 (FE), 110–111 (DA), and 138–139 (LA). Tyr-224 is a substrate binding site. Tyr-234 serves as the catalytic Proton donor. NAD(+) contacts are provided by residues Lys-243 and 272-274 (LVT).

The protein belongs to the TER reductase family. Monomer.

It carries out the reaction a 2,3-saturated acyl-[ACP] + NAD(+) = a (2E)-enoyl-[ACP] + NADH + H(+). The protein operates within lipid metabolism; fatty acid biosynthesis. In terms of biological role, involved in the final reduction of the elongation cycle of fatty acid synthesis (FAS II). Catalyzes the reduction of a carbon-carbon double bond in an enoyl moiety that is covalently linked to an acyl carrier protein (ACP). In Cytophaga hutchinsonii (strain ATCC 33406 / DSM 1761 / CIP 103989 / NBRC 15051 / NCIMB 9469 / D465), this protein is Enoyl-[acyl-carrier-protein] reductase [NADH].